The following is a 403-amino-acid chain: MSSLSNASHLMEDVQGIRKAQRADGTATVMAIGTAHPPHIFPQDTYADFYFRATNSEHKVELKKKFDRICKKTMIGKRYFNYDEEFLKKYPNITSFDEPSLNDRQDICVPGVPALGAEAAVKAIAEWGRPKSEITHLVFCTSCGVDMPSADFQCAKLLGLRTNVNKYCVYMQGCYAGGTVMRYAKDLAENNRGARVLVVCAELTIIGLRGPNESHLDNAIGNSLFGDGAAALIVGSDPIIGVEKPMFEIVCAKQTVIPNSEDVIHLHMREAGLMFYMSKDSPETISNNVEACLVDVFKSVGMTPPEDWNSLFWIPHPGGRAILDQVEAKLKLRPEKFRATRTVLWDCGNMVSACVLYILDEMRRKSADEGLETYGEGLEWGVLLGFGPGMTVETILLHSLPLM.

C174 is an active-site residue. CoA-binding positions include S281 and 318–321 (GGRA).

Belongs to the thiolase-like superfamily. Chalcone/stilbene synthases family. In terms of assembly, homodimer.

The protein operates within secondary metabolite biosynthesis; flavonoid biosynthesis. Its function is as follows. Catalyzes the iterative condensations of 8 molecules of malonyl-CoA to produce aromatic octaketides, SEK4 and SEK4b, the products of the minimal polyketide synthase for the benzoisochromanequinone actinorhodin. May be involved in the biosynthesis of the octaketide barbaloin. The sequence is that of Octaketide synthase 1 from Aloe arborescens (Kidachi aloe).